The following is a 51-amino-acid chain: Large ribosomal subunit protein eL39 (51 aa).

Residues 32 to 51 (KGSVKQHPKMRHWRRNTLKK) form a disordered region. Over residues 33–51 (GSVKQHPKMRHWRRNTLKK) the composition is skewed to basic residues.

It belongs to the eukaryotic ribosomal protein eL39 family.

The polypeptide is Large ribosomal subunit protein eL39 (Methanococcus vannielii (strain ATCC 35089 / DSM 1224 / JCM 13029 / OCM 148 / SB)).